A 353-amino-acid polypeptide reads, in one-letter code: Protein MGF 360-13L (353 aa).

It belongs to the asfivirus MGF 360 family.

Functionally, plays a role in virus cell tropism, and may be required for efficient virus replication in macrophages. This African swine fever virus (isolate Tick/Malawi/Lil 20-1/1983) (ASFV) protein is Protein MGF 360-13L.